A 163-amino-acid polypeptide reads, in one-letter code: NADH-quinone oxidoreductase subunit I (163 aa).

4Fe-4S ferredoxin-type domains lie at Leu54 to Ala84 and Thr94 to Ile123. Cys64, Cys67, Cys70, Cys74, Cys103, Cys106, Cys109, and Cys113 together coordinate [4Fe-4S] cluster.

Belongs to the complex I 23 kDa subunit family. NDH-1 is composed of 14 different subunits. Subunits NuoA, H, J, K, L, M, N constitute the membrane sector of the complex. The cofactor is [4Fe-4S] cluster.

It is found in the cell inner membrane. The enzyme catalyses a quinone + NADH + 5 H(+)(in) = a quinol + NAD(+) + 4 H(+)(out). In terms of biological role, NDH-1 shuttles electrons from NADH, via FMN and iron-sulfur (Fe-S) centers, to quinones in the respiratory chain. The immediate electron acceptor for the enzyme in this species is believed to be ubiquinone. Couples the redox reaction to proton translocation (for every two electrons transferred, four hydrogen ions are translocated across the cytoplasmic membrane), and thus conserves the redox energy in a proton gradient. The chain is NADH-quinone oxidoreductase subunit I from Xylella fastidiosa (strain 9a5c).